The sequence spans 180 residues: ATP-dependent protease subunit HslV (180 aa).

Thr2 is a catalytic residue. Na(+) is bound by residues Gly158, Cys161, and Thr164.

It belongs to the peptidase T1B family. HslV subfamily. As to quaternary structure, a double ring-shaped homohexamer of HslV is capped on each side by a ring-shaped HslU homohexamer. The assembly of the HslU/HslV complex is dependent on binding of ATP.

Its subcellular location is the cytoplasm. The catalysed reaction is ATP-dependent cleavage of peptide bonds with broad specificity.. Allosterically activated by HslU binding. In terms of biological role, protease subunit of a proteasome-like degradation complex believed to be a general protein degrading machinery. The chain is ATP-dependent protease subunit HslV from Baumannia cicadellinicola subsp. Homalodisca coagulata.